The following is a 465-amino-acid chain: Na(+)-translocating NADH-quinone reductase subunit A (465 aa).

Belongs to the NqrA family. In terms of assembly, composed of six subunits; NqrA, NqrB, NqrC, NqrD, NqrE and NqrF.

It catalyses the reaction a ubiquinone + n Na(+)(in) + NADH + H(+) = a ubiquinol + n Na(+)(out) + NAD(+). In terms of biological role, NQR complex catalyzes the reduction of ubiquinone-1 to ubiquinol by two successive reactions, coupled with the transport of Na(+) ions from the cytoplasm to the periplasm. NqrA to NqrE are probably involved in the second step, the conversion of ubisemiquinone to ubiquinol. The chain is Na(+)-translocating NADH-quinone reductase subunit A from Chlamydia trachomatis serovar L2b (strain UCH-1/proctitis).